A 620-amino-acid polypeptide reads, in one-letter code: KIF-binding protein (620 aa).

Coiled coils occupy residues 30-64 (YKSK…QDIL) and 133-169 (LIKS…QLQN).

The protein belongs to the KIF-binding protein family.

It is found in the cytoplasm. Its subcellular location is the cytoskeleton. Its function is as follows. Activator of KIF1B plus-end-directed microtubule motor activity. Required for organization of axonal microtubules, and axonal outgrowth and maintenance during peripheral and central nervous system development. This Dictyostelium discoideum (Social amoeba) protein is KIF-binding protein (kifbp).